The following is a 470-amino-acid chain: Hydroxymethylglutaryl-CoA synthase (470 aa).

The active-site Proton donor/acceptor is the glutamate 100. The active-site Acyl-thioester intermediate is the cysteine 134. 7 residues coordinate (3S)-3-hydroxy-3-methylglutaryl-CoA: cysteine 134, threonine 176, serine 225, histidine 269, lysine 278, asparagine 348, and serine 382. Histidine 269 serves as the catalytic Proton donor/acceptor.

It belongs to the thiolase-like superfamily. HMG-CoA synthase family.

It catalyses the reaction acetoacetyl-CoA + acetyl-CoA + H2O = (3S)-3-hydroxy-3-methylglutaryl-CoA + CoA + H(+). It functions in the pathway metabolic intermediate biosynthesis; (R)-mevalonate biosynthesis; (R)-mevalonate from acetyl-CoA: step 2/3. Hydroxymethylglutaryl-CoA synthase; part of the first module of ergosterol biosynthesis pathway that includes the early steps of the pathway, conserved across all eukaryotes, and which results in the formation of mevalonate from acetyl-coenzyme A (acetyl-CoA). This module also plays a key role in the biosynthesis of triterpenes such as ganoderic acids (GA), a group of highly oxygenated lanostane-type triterpenoids which are well recognized as a main group of unique bioactive compounds in the medicinal mushroom Ganoderma lucidum. In this module, the acetyl-CoA acetyltransferase catalyzes the formation of acetoacetyl-CoA. The hydroxymethylglutaryl-CoA synthase HMGS then condenses acetyl-CoA with acetoacetyl-CoA to form HMG-CoA. The rate-limiting step of the early module is the reduction to mevalonate by the 3-hydroxy-3-methylglutaryl-coenzyme A (HMG-CoA) reductase. The protein is Hydroxymethylglutaryl-CoA synthase of Ganoderma lucidum (Ling zhi medicinal fungus).